The following is a 504-amino-acid chain: Glucose-6-phosphate isomerase (504 aa).

Glu333 (proton donor) is an active-site residue. Catalysis depends on residues His364 and Lys473.

Belongs to the GPI family.

It is found in the cytoplasm. The enzyme catalyses alpha-D-glucose 6-phosphate = beta-D-fructose 6-phosphate. It functions in the pathway carbohydrate biosynthesis; gluconeogenesis. The protein operates within carbohydrate degradation; glycolysis; D-glyceraldehyde 3-phosphate and glycerone phosphate from D-glucose: step 2/4. Catalyzes the reversible isomerization of glucose-6-phosphate to fructose-6-phosphate. The polypeptide is Glucose-6-phosphate isomerase (Xanthomonas oryzae pv. oryzae (strain MAFF 311018)).